A 382-amino-acid polypeptide reads, in one-letter code: Pentraxin-related protein PTX3 (382 aa).

Positions 1-17 are cleaved as a signal peptide; the sequence is MHISVILFCALWSAVSA. A coiled-coil region spans residues 79 to 137; it reads VMLRGELQKLQAELGRLEGSLQKLCGPEAPSETRLARALDDLLQASRDAGRRLARLEDA. 2 disulfide bridges follow: cysteine 180–cysteine 358 and cysteine 211–cysteine 272. Residues 180 to 382 enclose the Pentraxin (PTX) domain; the sequence is CETAILFPMR…QPHGGAQYVY (203 aa). The N-linked (GlcNAc...) asparagine glycan is linked to asparagine 221.

In terms of assembly, homooctamer; disulfide-linked. Binds to C1q.

It is found in the secreted. In terms of biological role, plays a role in the regulation of innate resistance to pathogens, inflammatory reactions, possibly clearance of self-components and female fertility. This is Pentraxin-related protein PTX3 (PTX3) from Bos taurus (Bovine).